A 735-amino-acid chain; its full sequence is MAADGYLPDWLEDTLSEGIRQWWKLKPGPPPPKPAERHKDDSRGLVLPGYKYLGPFNGLDKGEPVNEADAAALEHDKAYDRQLDSGDNPYLKYNHADAEFQERLKEDTSFGGNLGRAVFQAKKRVLEPLGLVEEPVKTAPGKKRPVEHSPVEPDSSSGTGKAGQQPARKRLNFGQTGDADSVPDPQPLGQPPAAPSGLGTNTMATGSGAPMADNNEGADGVGNSSGNWHCDSTWMGDRVITTSTRTWALPTYNNHLYKQISSQSGASNDNHYFGYSTPWGYFDFNRFHCHFSPRDWQRLINNNWGFRPKRLNFKLFNIQVKEVTQNDGTTTIANNLTSTVQVFTDSEYQLPYVLGSAHQGCLPPFPADVFMVPQYGYLTLNNGSQAVGRSSFYCLEYFPSQMLRTGNNFTFSYTFEDVPFHSSYAHSQSLDRLMNPLIDQYLYYLSRTNTPSGTTTQSRLQFSQAGASDIRDQSRNWLPGPCYRQQRVSKTSADNNNSEYSWTGATKYHLNGRDSLVNPGPAMASHKDDEEKFFPQSGVLIFGKQGSEKTNVDIEKVMITDEEEIRTTNPVATEQYGSVSTNLQRGNRQAATADVNTQGVLPGMVWQDRDVYLQGPIWAKIPHTDGHFHPSPLMGGFGLKHPPPQILIKNTPVPANPSTTFSAAKFASFITQYSTGQVSVEIEWELQKENSKRWNPEIQYTSNYNKSVNVDFTVDTNGVYSEPRPIGTRYLTRNL.

Positions 22-44 are disordered; it reads WWKLKPGPPPPKPAERHKDDSRG. Residues 34–43 are compositionally biased toward basic and acidic residues; the sequence is PAERHKDDSR. Residues 52–97 form a phospholipase A2-like region; that stretch reads YLGPFNGLDKGEPVNEADAAALEHDKAYDRQLDSGDNPYLKYNHAD. Positions 136–224 are disordered; sequence VKTAPGKKRP…NEGADGVGNS (89 aa). Over residues 184-194 the composition is skewed to pro residues; that stretch reads DPQPLGQPPAA.

This sequence belongs to the parvoviridae capsid protein family.

It localises to the virion. It is found in the host nucleus. The protein resides in the host nucleolus. Its function is as follows. Capsid protein self-assembles to form an icosahedral capsid with a T=1 symmetry, about 22 nm in diameter, and consisting of 60 copies of three size variants of the capsid protein VP1, VP2 and VP3 which differ in their N-terminus. The capsid encapsulates the genomic ssDNA. Binds to host cell heparan sulfate and uses host ITGA5-ITGB1 as coreceptor on the cell surface to provide virion attachment to target cell. This attachment induces virion internalization predominantly through clathrin-dependent endocytosis. Binding to the host receptor also induces capsid rearrangements leading to surface exposure of VP1 N-terminus, specifically its phospholipase A2-like region and putative nuclear localization signal(s). VP1 N-terminus might serve as a lipolytic enzyme to breach the endosomal membrane during entry into host cell and might contribute to virus transport to the nucleus. In Adeno-associated virus 2 (isolate Srivastava/1982) (AAV-2), this protein is Capsid protein VP1 (VP1).